The sequence spans 313 residues: MGHNHNHAGGSNKKVLLISFIMITGYMIIEAIGGFLTNSLALLSDAGHMLSDSISLMVALIAFKLAEKKASHHKTFGYKRFEILAAVINGVALILISLYIIYEAIKRFSHPPEVATTGMLTISIIGLAVNILVAWIMLNGGDTKNNLNIRGAYLHVISDMLGSIGAILAAILIIFFGWSWADPAASVIVAILVLRSGYHVTKDSIHVLMEGTPGNIDVTDIIHTIEETEGIQSIHDLHIWSITSGLNALSCHAVVNDQLTISESESILRKIEHELGDKGITHVTIQMETAAHNHDNTILCQSQTENPRDHHHH.

The Extracellular segment spans residues 1-14 (MGHNHNHAGGSNKK). The chain crosses the membrane as a helical span at residues 15–35 (VLLISFIMITGYMIIEAIGGF). Residues 36–45 (LTNSLALLSD) lie on the Cytoplasmic side of the membrane. Residues 46 to 66 (AGHMLSDSISLMVALIAFKLA) form a helical membrane-spanning segment. The Extracellular portion of the chain corresponds to 67–80 (EKKASHHKTFGYKR). A helical membrane pass occupies residues 81 to 101 (FEILAAVINGVALILISLYII). At 102–117 (YEAIKRFSHPPEVATT) the chain is on the cytoplasmic side. The chain crosses the membrane as a helical span at residues 118-138 (GMLTISIIGLAVNILVAWIML). The Extracellular portion of the chain corresponds to 139–159 (NGGDTKNNLNIRGAYLHVISD). A helical transmembrane segment spans residues 160–180 (MLGSIGAILAAILIIFFGWSW). The Cytoplasmic portion of the chain corresponds to 181–313 (ADPAASVIVA…TENPRDHHHH (133 aa)).

The protein belongs to the cation diffusion facilitator (CDF) transporter (TC 2.A.4) family. SLC30A subfamily.

Its subcellular location is the cell membrane. In terms of biological role, involved in divalent cation and potassium homeostasis in the cell. Catalyzes the active efflux of zinc, cadmium and cobalt, in exchange for potassium and H(+) ions. In Bacillus velezensis (strain DSM 23117 / BGSC 10A6 / LMG 26770 / FZB42) (Bacillus amyloliquefaciens subsp. plantarum), this protein is Cadmium, cobalt and zinc/H(+)-K(+) antiporter (czcD).